Reading from the N-terminus, the 230-residue chain is Ribonuclease HII (230 aa).

In terms of domain architecture, RNase H type-2 spans 28-217; it reads FRIAGIDEAG…VKEHLPSQPD (190 aa). Residues D34, E35, and D126 each coordinate a divalent metal cation. Positions 209–230 are disordered; sequence KEHLPSQPDSDTAGPSTGLFSF. Over residues 215 to 230 the composition is skewed to polar residues; that stretch reads QPDSDTAGPSTGLFSF.

This sequence belongs to the RNase HII family. Requires Mn(2+) as cofactor. Mg(2+) serves as cofactor.

The protein resides in the cytoplasm. The catalysed reaction is Endonucleolytic cleavage to 5'-phosphomonoester.. Endonuclease that specifically degrades the RNA of RNA-DNA hybrids. In Citrifermentans bemidjiense (strain ATCC BAA-1014 / DSM 16622 / JCM 12645 / Bem) (Geobacter bemidjiensis), this protein is Ribonuclease HII.